The primary structure comprises 198 residues: Prostamide/prostaglandin F synthase (198 aa).

The residue at position 108 (Y108) is a Phosphotyrosine.

It belongs to the peroxiredoxin-like PRXL2 family. Prostamide/prostaglandin F synthase subfamily.

It is found in the cytoplasm. It localises to the cytosol. The enzyme catalyses prostaglandin H2 + [thioredoxin]-dithiol = prostaglandin F2alpha + [thioredoxin]-disulfide. The catalysed reaction is prostamide F2alpha + [thioredoxin]-disulfide = prostamide H2 + [thioredoxin]-dithiol. Functionally, catalyzes the reduction of prostaglandin-ethanolamide H(2) (prostamide H(2)) to prostamide F(2alpha) with NADPH as proton donor. Also able to reduce prostaglandin H(2) to prostaglandin F(2alpha). This chain is Prostamide/prostaglandin F synthase (PRXL2B), found in Pongo abelii (Sumatran orangutan).